Here is a 210-residue protein sequence, read N- to C-terminus: Thiamine-phosphate synthase (210 aa).

4-amino-2-methyl-5-(diphosphooxymethyl)pyrimidine contacts are provided by residues Gln-38–Lys-42 and Asn-70. The Mg(2+) site is built by Asp-71 and Asp-90. Residue Ser-107 coordinates 4-amino-2-methyl-5-(diphosphooxymethyl)pyrimidine. Residue Thr-132–Thr-134 participates in 2-[(2R,5Z)-2-carboxy-4-methylthiazol-5(2H)-ylidene]ethyl phosphate binding. Lys-135 contributes to the 4-amino-2-methyl-5-(diphosphooxymethyl)pyrimidine binding site. Ile-183–Ser-184 contributes to the 2-[(2R,5Z)-2-carboxy-4-methylthiazol-5(2H)-ylidene]ethyl phosphate binding site.

This sequence belongs to the thiamine-phosphate synthase family. Mg(2+) is required as a cofactor.

The catalysed reaction is 2-[(2R,5Z)-2-carboxy-4-methylthiazol-5(2H)-ylidene]ethyl phosphate + 4-amino-2-methyl-5-(diphosphooxymethyl)pyrimidine + 2 H(+) = thiamine phosphate + CO2 + diphosphate. It catalyses the reaction 2-(2-carboxy-4-methylthiazol-5-yl)ethyl phosphate + 4-amino-2-methyl-5-(diphosphooxymethyl)pyrimidine + 2 H(+) = thiamine phosphate + CO2 + diphosphate. The enzyme catalyses 4-methyl-5-(2-phosphooxyethyl)-thiazole + 4-amino-2-methyl-5-(diphosphooxymethyl)pyrimidine + H(+) = thiamine phosphate + diphosphate. It functions in the pathway cofactor biosynthesis; thiamine diphosphate biosynthesis; thiamine phosphate from 4-amino-2-methyl-5-diphosphomethylpyrimidine and 4-methyl-5-(2-phosphoethyl)-thiazole: step 1/1. Its function is as follows. Condenses 4-methyl-5-(beta-hydroxyethyl)thiazole monophosphate (THZ-P) and 2-methyl-4-amino-5-hydroxymethyl pyrimidine pyrophosphate (HMP-PP) to form thiamine monophosphate (TMP). This chain is Thiamine-phosphate synthase, found in Archaeoglobus fulgidus (strain ATCC 49558 / DSM 4304 / JCM 9628 / NBRC 100126 / VC-16).